A 70-amino-acid polypeptide reads, in one-letter code: uncharacterized protein (70 aa).

Positions 1–16 (MKLLLVLITLIIAALA) are cleaved as a signal peptide.

This is an uncharacterized protein from Orgyia pseudotsugata (Douglas-fir tussock moth).